The sequence spans 134 residues: MEGKTLIVSVLIMSLFMAQNQVDANICCPSIQARTFYNACLFAVGSPSSCIRNSSCLDISESTCPRGYTNDILENTGDAVTEYCKLGCVSSVCGALTILQNSDASEIVNGEVEKCTMACSTVCTKGSMNAVENA.

The signal sequence occupies residues 1–24 (MEGKTLIVSVLIMSLFMAQNQVDA). Cystine bridges form between cysteine 27–cysteine 64, cysteine 28–cysteine 56, and cysteine 40–cysteine 50. Positions 71–134 (DILENTGDAV…KGSMNAVENA (64 aa)) are cleaved as a propeptide — acidic domain.

It belongs to the plant thionin (TC 1.C.44) family.

The protein localises to the secreted. Thionins are small plant proteins which are toxic to animal cells. They seem to exert their toxic effect at the level of the cell membrane. Their precise function is not known. This is Probable thionin-2.4 from Arabidopsis thaliana (Mouse-ear cress).